A 165-amino-acid polypeptide reads, in one-letter code: UPF0303 protein Bcep1808_1522 (165 aa).

Belongs to the UPF0303 family.

The protein is UPF0303 protein Bcep1808_1522 of Burkholderia vietnamiensis (strain G4 / LMG 22486) (Burkholderia cepacia (strain R1808)).